We begin with the raw amino-acid sequence, 332 residues long: Ribose-phosphate pyrophosphokinase (332 aa).

D57–E59 provides a ligand contact to ATP. Mg(2+) is bound by residues H150 and D189. The active site involves K213. D-ribose 5-phosphate-binding positions include R215, D239, and D243–T247.

Belongs to the ribose-phosphate pyrophosphokinase family. Class I subfamily. In terms of assembly, homohexamer. The cofactor is Mg(2+).

The protein localises to the cytoplasm. It catalyses the reaction D-ribose 5-phosphate + ATP = 5-phospho-alpha-D-ribose 1-diphosphate + AMP + H(+). The protein operates within metabolic intermediate biosynthesis; 5-phospho-alpha-D-ribose 1-diphosphate biosynthesis; 5-phospho-alpha-D-ribose 1-diphosphate from D-ribose 5-phosphate (route I): step 1/1. Its function is as follows. Involved in the biosynthesis of the central metabolite phospho-alpha-D-ribosyl-1-pyrophosphate (PRPP) via the transfer of pyrophosphoryl group from ATP to 1-hydroxyl of ribose-5-phosphate (Rib-5-P). The polypeptide is Ribose-phosphate pyrophosphokinase (Gloeobacter violaceus (strain ATCC 29082 / PCC 7421)).